The following is a 396-amino-acid chain: MNKYNYMENVLQHINANVISLRDDEIKGNNIILKEILNIIIDKLKTKNIMFRKMYTCIFFGGSYYDGLRVGHPNEFDLDLLLTLHNLTKPIITKANEPGYVFLKLGNINNFLNIDDFKMYKQLSNLINKNGYLDVRKVLSWFEGIVTSSLNDIKEGSIYNFQIKGNTYKGTIHKGGPAFTLKIKGPNGSNMDIDLVPCFRFTEEHWPQGFKKSTSQQKSFFIVPKPLPDSTKSHYWRLSFQEQERELINNKGRLKPALRLLKQMRDTLNHHRIASYYLKTVFLWQVEEIGVDQSHWNSSLSYVFVCALKRYKEFLDSDNLPYFWEKKNNLLSGLHEDTLKNIRGSILKVLTDIESNNKDPNAIVKYLLTPEEQKRIMNGGNPQQSANAENGSCLSM.

Residues S63 and 75 to 77 (EFD) contribute to the ATP site. E75, D77, and D194 together coordinate Mg(2+). Residue D194 coordinates GTP. ATP-binding positions include 241 to 244 (QEQE), K262, and 275 to 279 (SYYLK). V286, E287, and D292 together coordinate Mn(2+). The tract at residues 376–396 (IMNGGNPQQSANAENGSCLSM) is disordered. Positions 380-396 (GNPQQSANAENGSCLSM) are enriched in polar residues.

It belongs to the mab-21 family. Mg(2+) is required as a cofactor. Requires Mn(2+) as cofactor.

The enzyme catalyses GTP + ATP = 2',3'-cGAMP + 2 diphosphate. The catalysed reaction is GTP + ATP = pppGp(2'-5')A + diphosphate. It carries out the reaction pppGp(2'-5')A = 2',3'-cGAMP + diphosphate. Nucleotidyltransferase that catalyzes the formation of cyclic GMP-AMP (2',3'-cGAMP) from ATP and GTP and plays a key role in innate immunity. Acts as a key sensor of double-stranded RNA (dsRNA), the presence of dsRNA in the cytoplasm being a danger signal that triggers the immune responses. Directly binds dsRNA, activating the nucleotidyltransferase activity, leading to synthesis of 2',3'-cGAMP, a second messenger that binds to and activates Sting, thereby triggering the immune response via activation of the NF-kappa-B transcription factor. This Aethina tumida (Small hive beetle) protein is Cyclic GMP-AMP synthase-like receptor.